Reading from the N-terminus, the 89-residue chain is Small ribosomal subunit protein uS15 (89 aa).

It belongs to the universal ribosomal protein uS15 family. In terms of assembly, part of the 30S ribosomal subunit. Forms a bridge to the 50S subunit in the 70S ribosome, contacting the 23S rRNA.

Functionally, one of the primary rRNA binding proteins, it binds directly to 16S rRNA where it helps nucleate assembly of the platform of the 30S subunit by binding and bridging several RNA helices of the 16S rRNA. In terms of biological role, forms an intersubunit bridge (bridge B4) with the 23S rRNA of the 50S subunit in the ribosome. In Frankia alni (strain DSM 45986 / CECT 9034 / ACN14a), this protein is Small ribosomal subunit protein uS15.